The chain runs to 147 residues: Hemoglobin subunit beta (147 aa).

The Globin domain maps to 3-147 (HWTAEEKQLI…VAHALARKYH (145 aa)). The heme b site is built by H64 and H93.

This sequence belongs to the globin family. Heterotetramer of two alpha chains and two beta chains. As to expression, red blood cells.

Involved in oxygen transport from the lung to the various peripheral tissues. This Anas platyrhynchos (Mallard) protein is Hemoglobin subunit beta (HBB).